The primary structure comprises 579 residues: Adipocyte plasma membrane-associated protein Hemomucin (579 aa).

Topologically, residues 1 to 6 (MGLLYA) are cytoplasmic. A helical transmembrane segment spans residues 7 to 29 (LRVRIMNFMIFFLLIILMPGLPP). The Extracellular segment spans residues 30-579 (RTTFPFKDYI…INKQGVNVEL (550 aa)). N-linked (GlcNAc...) asparagine glycans are attached at residues asparagine 213 and asparagine 217. Residues 427-579 (GLEASIGVPP…INKQGVNVEL (153 aa)) form a disordered region. Positions 435-529 (PPSKATPKPK…PKPTTTTTPT (95 aa)) are enriched in low complexity.

Belongs to the strictosidine synthase family. Interacts with sturkopf. In terms of processing, O-glycosylated. Glycosylated in the ovary of 4 day old females. Post-translationally, phosphorylated. In terms of tissue distribution, detected in ovaries (at protein level). In larvae, detected in the fat body, salivary glands, imaginal disks and gut (at protein level). In adults, expressed in the cardia, and in regions of the ventriculus including the area posterior to the cardia. In females also expressed in follicle cells.

The protein localises to the cell membrane. Its function is as follows. Transmembrane mucin that may be involved in cellular adhesion and the innate immune response. Membrane-tethered mucins are involved in many cell surface functions and form a physical barrier around cells to regulate cell-cell and/or cell-substrate interactions, and protect against pathogens or harmful extracellular conditions. This mucin likely acts in hemocyte adhesion as it is released from hemocytes during coagulation and is also able to bind lipophorin particles which form part of the hemocyte coagulogen. Able to induce expression of the antibacterial proteins in the presence of GalNAc-specific lectins and so probably also functions in the innate immune response. This Drosophila melanogaster (Fruit fly) protein is Adipocyte plasma membrane-associated protein Hemomucin.